Here is a 181-residue protein sequence, read N- to C-terminus: MTIEVLKERIPDFAKDVRLNLSSMASDETLGEQTKYGLLVATAIATRNVEVIAAIEAEAAGKLSPAALGAAKSAAAIMAMNNVYYRFVHLASNKDYATMPARLRMNVIANPGVDKADFELWSLAVSAINGCGMCIDSHEKVLLQAGVSTAAIQTAVRFAAIMQSVAVSIEAGAASLAVAAE.

The Proton donor role is filled by Cys-131. Residues Cys-131 and Cys-134 are joined by a disulfide bond. Cys-134 (cysteine sulfenic acid (-SOH) intermediate) is an active-site residue.

It belongs to the AhpD family.

It carries out the reaction N(6)-[(R)-dihydrolipoyl]-L-lysyl-[lipoyl-carrier protein] + a hydroperoxide = N(6)-[(R)-lipoyl]-L-lysyl-[lipoyl-carrier protein] + an alcohol + H2O. Functionally, antioxidant protein with alkyl hydroperoxidase activity. Required for the reduction of the AhpC active site cysteine residues and for the regeneration of the AhpC enzyme activity. The chain is Alkyl hydroperoxide reductase AhpD from Rhodopseudomonas palustris (strain BisA53).